Reading from the N-terminus, the 239-residue chain is tRNA (guanine-N(7)-)-methyltransferase (239 aa).

S-adenosyl-L-methionine-binding residues include Glu69, Glu94, Asp121, and Asp144. Residue Asp144 is part of the active site. Lys148 contacts substrate. The interval 150–155 (RHNKRR) is interaction with RNA. Residues Asp180 and 217–220 (TKFE) contribute to the substrate site.

Belongs to the class I-like SAM-binding methyltransferase superfamily. TrmB family. Monomer.

It carries out the reaction guanosine(46) in tRNA + S-adenosyl-L-methionine = N(7)-methylguanosine(46) in tRNA + S-adenosyl-L-homocysteine. It functions in the pathway tRNA modification; N(7)-methylguanine-tRNA biosynthesis. In terms of biological role, catalyzes the formation of N(7)-methylguanine at position 46 (m7G46) in tRNA. The chain is tRNA (guanine-N(7)-)-methyltransferase from Shigella dysenteriae serotype 1 (strain Sd197).